The chain runs to 78 residues: MWPNSILVLTVLLISSTLVTGGGVKGAEKGVCPPDNVRCIRGEDPQCHNDNDCKDQKICCYWHCGFKCVQPVKDSWEQ.

An N-terminal signal peptide occupies residues 1–21 (MWPNSILVLTVLLISSTLVTG). In terms of domain architecture, WAP spans 25 to 72 (KGAEKGVCPPDNVRCIRGEDPQCHNDNDCKDQKICCYWHCGFKCVQPV). 4 disulfide bridges follow: cysteine 32–cysteine 60, cysteine 39–cysteine 64, cysteine 47–cysteine 59, and cysteine 53–cysteine 68.

The protein resides in the secreted. In terms of biological role, antibacterial protein. Putative acid-stable proteinase inhibitor. This Rattus norvegicus (Rat) protein is WAP four-disulfide core domain protein 12.